Here is a 207-residue protein sequence, read N- to C-terminus: dTTP/UTP pyrophosphatase (207 aa).

D80 functions as the Proton acceptor in the catalytic mechanism.

This sequence belongs to the Maf family. YhdE subfamily. A divalent metal cation serves as cofactor.

It is found in the cytoplasm. It carries out the reaction dTTP + H2O = dTMP + diphosphate + H(+). The enzyme catalyses UTP + H2O = UMP + diphosphate + H(+). In terms of biological role, nucleoside triphosphate pyrophosphatase that hydrolyzes dTTP and UTP. May have a dual role in cell division arrest and in preventing the incorporation of modified nucleotides into cellular nucleic acids. This is dTTP/UTP pyrophosphatase (maf1) from Agrobacterium fabrum (strain C58 / ATCC 33970) (Agrobacterium tumefaciens (strain C58)).